Here is a 689-residue protein sequence, read N- to C-terminus: Pentatricopeptide repeat-containing protein At1g71460, chloroplastic (689 aa).

The N-terminal 49 residues, 1-49 (MEVVSSLGIRDLPASLSVTTSLNHRPHRSDKDGAPAKSPIRPSRTRRPS), are a transit peptide targeting the chloroplast. Residues 16 to 68 (LSVTTSLNHRPHRSDKDGAPAKSPIRPSRTRRPSTSPAKKPKPFRERDAFPSS) form a disordered region. Positions 38 to 52 (SPIRPSRTRRPSTSP) are enriched in low complexity. PPR repeat units follow at residues 75–109 (NPYI…GIPV), 110–144 (NATT…GLES), 145–175 (NEFL…STSS), 176–212 (NVYS…GVDL), 213–247 (NVYS…GLFN), 248–282 (SVFL…DIVV), 283–309 (WGAM…MISE), 315–350 (NSVI…NYVE), 351–381 (QPFV…SKQR), 382–416 (NAIS…GFRP), 417–451 (DVVT…LFLP), 452–482 (NVSL…LEQR), 483–517 (NVKA…KHRP), 518–552 (DSVT…EFES), 553–583 (IPFV…VAVK), 584–618 (GSLT…GFTP), 619–649 (NTFT…MLRM), and 655–689 (SEEH…SLQT).

It belongs to the PPR family. PCMP-A subfamily.

The protein localises to the plastid. It localises to the chloroplast. The polypeptide is Pentatricopeptide repeat-containing protein At1g71460, chloroplastic (PCMP-A3) (Arabidopsis thaliana (Mouse-ear cress)).